The sequence spans 203 residues: MQTDSDTRIATVERKTKETNVFVSLDLDGNGEYDVDTGIGFLDHMLEQLSRHSLIDLKVRAQGDLHIDFHHTTEDTGIVIGEAVRKALGDFKGIRRYATAIIPMDETCTRVSIDVSQRPYLIWKVGFTKPKLGDMDTELFKEWFQAFAQNAGITLHIENMYGDNNHHIVESCFKGLARALRDAIEIDPRAANRIPSTKGVLGN.

The protein belongs to the imidazoleglycerol-phosphate dehydratase family.

It localises to the cytoplasm. It catalyses the reaction D-erythro-1-(imidazol-4-yl)glycerol 3-phosphate = 3-(imidazol-4-yl)-2-oxopropyl phosphate + H2O. The protein operates within amino-acid biosynthesis; L-histidine biosynthesis; L-histidine from 5-phospho-alpha-D-ribose 1-diphosphate: step 6/9. The chain is Imidazoleglycerol-phosphate dehydratase from Parvibaculum lavamentivorans (strain DS-1 / DSM 13023 / NCIMB 13966).